The sequence spans 568 residues: Urease subunit alpha (568 aa).

A Urease domain is found at 131-568; sequence GGIDTHIHFI…LPMAQRYFLF (438 aa). The Ni(2+) site is built by His136, His138, and Lys219. Lys219 is modified (N6-carboxylysine). Position 221 (His221) interacts with substrate. Ni(2+) is bound by residues His248 and His274. His322 serves as the catalytic Proton donor. Asp362 provides a ligand contact to Ni(2+).

It belongs to the metallo-dependent hydrolases superfamily. Urease alpha subunit family. Heterotrimer of UreA (gamma), UreB (beta) and UreC (alpha) subunits. Three heterotrimers associate to form the active enzyme. Ni cation is required as a cofactor. Post-translationally, carboxylation allows a single lysine to coordinate two nickel ions.

The protein localises to the cytoplasm. The enzyme catalyses urea + 2 H2O + H(+) = hydrogencarbonate + 2 NH4(+). It participates in nitrogen metabolism; urea degradation; CO(2) and NH(3) from urea (urease route): step 1/1. The sequence is that of Urease subunit alpha from Nostoc sp. (strain PCC 7120 / SAG 25.82 / UTEX 2576).